The chain runs to 95 residues: Aspartyl/glutamyl-tRNA(Asn/Gln) amidotransferase subunit C (95 aa).

Belongs to the GatC family. Heterotrimer of A, B and C subunits.

The catalysed reaction is L-glutamyl-tRNA(Gln) + L-glutamine + ATP + H2O = L-glutaminyl-tRNA(Gln) + L-glutamate + ADP + phosphate + H(+). It carries out the reaction L-aspartyl-tRNA(Asn) + L-glutamine + ATP + H2O = L-asparaginyl-tRNA(Asn) + L-glutamate + ADP + phosphate + 2 H(+). Its function is as follows. Allows the formation of correctly charged Asn-tRNA(Asn) or Gln-tRNA(Gln) through the transamidation of misacylated Asp-tRNA(Asn) or Glu-tRNA(Gln) in organisms which lack either or both of asparaginyl-tRNA or glutaminyl-tRNA synthetases. The reaction takes place in the presence of glutamine and ATP through an activated phospho-Asp-tRNA(Asn) or phospho-Glu-tRNA(Gln). The sequence is that of Aspartyl/glutamyl-tRNA(Asn/Gln) amidotransferase subunit C from Prosthecochloris aestuarii (strain DSM 271 / SK 413).